We begin with the raw amino-acid sequence, 217 residues long: Neurotrophic factor BDNF precursor form (217 aa).

A propeptide spanning residues 1 to 108 (PMKEVSIRGQ…AANMSMRVRR (108 aa)) is cleaved from the precursor. An N-linked (GlcNAc...) asparagine glycan is attached at asparagine 101. Disulfide bonds link cysteine 121-cysteine 188 and cysteine 166-cysteine 217.

This sequence belongs to the NGF-beta family.

It is found in the secreted. In terms of biological role, promotes the survival of neuronal populations that are all located either in the central nervous system or directly connected to it. The polypeptide is Neurotrophic factor BDNF precursor form (BDNF) (Acrantophis dumerili (Dumeril's ground boa)).